Here is a 338-residue protein sequence, read N- to C-terminus: Fructose-1,6-bisphosphatase class 1 (338 aa).

The Mg(2+) site is built by glutamate 90, aspartate 112, leucine 114, and aspartate 115. Substrate contacts are provided by residues 115-118, asparagine 207, and lysine 273; that span reads DGSS. Residue glutamate 279 coordinates Mg(2+).

It belongs to the FBPase class 1 family. In terms of assembly, homotetramer. Mg(2+) is required as a cofactor.

Its subcellular location is the cytoplasm. The enzyme catalyses beta-D-fructose 1,6-bisphosphate + H2O = beta-D-fructose 6-phosphate + phosphate. The protein operates within carbohydrate biosynthesis; gluconeogenesis. The chain is Fructose-1,6-bisphosphatase class 1 from Stenotrophomonas maltophilia (strain R551-3).